The chain runs to 331 residues: Anthranilate phosphoribosyltransferase (331 aa).

5-phospho-alpha-D-ribose 1-diphosphate contacts are provided by residues G79, 82–83, T87, 89–92, 107–115, and S119; these read GD, NVST, and KHGNYGVSS. Residue G79 participates in anthranilate binding. S91 is a binding site for Mg(2+). An anthranilate-binding site is contributed by N110. R165 lines the anthranilate pocket. 2 residues coordinate Mg(2+): D223 and E224.

Belongs to the anthranilate phosphoribosyltransferase family. In terms of assembly, homodimer. Mg(2+) serves as cofactor.

The catalysed reaction is N-(5-phospho-beta-D-ribosyl)anthranilate + diphosphate = 5-phospho-alpha-D-ribose 1-diphosphate + anthranilate. Its pathway is amino-acid biosynthesis; L-tryptophan biosynthesis; L-tryptophan from chorismate: step 2/5. In terms of biological role, catalyzes the transfer of the phosphoribosyl group of 5-phosphorylribose-1-pyrophosphate (PRPP) to anthranilate to yield N-(5'-phosphoribosyl)-anthranilate (PRA). This is Anthranilate phosphoribosyltransferase from Christiangramia forsetii (strain DSM 17595 / CGMCC 1.15422 / KT0803) (Gramella forsetii).